Here is a 215-residue protein sequence, read N- to C-terminus: Cytochrome c biogenesis ATP-binding export protein CcmA (215 aa).

The ABC transporter domain maps to 3–211 (LTAEILAARR…KMTGFAGVDN (209 aa)). Residue 35–42 (GKNGSGKS) coordinates ATP.

Belongs to the ABC transporter superfamily. CcmA exporter (TC 3.A.1.107) family. In terms of assembly, the complex is composed of two ATP-binding proteins (CcmA) and two transmembrane proteins (CcmB).

Its subcellular location is the cell inner membrane. The enzyme catalyses heme b(in) + ATP + H2O = heme b(out) + ADP + phosphate + H(+). Its function is as follows. Part of the ABC transporter complex CcmAB involved in the biogenesis of c-type cytochromes; once thought to export heme, this seems not to be the case, but its exact role is uncertain. Responsible for energy coupling to the transport system. This is Cytochrome c biogenesis ATP-binding export protein CcmA from Rhizobium johnstonii (strain DSM 114642 / LMG 32736 / 3841) (Rhizobium leguminosarum bv. viciae).